A 301-amino-acid polypeptide reads, in one-letter code: Acetyl-coenzyme A carboxylase carboxyl transferase subunit beta (301 aa).

Residues 25–294 (LWIKDPSTGE…NSDAPAPQKP (270 aa)) form the CoA carboxyltransferase N-terminal domain.

Belongs to the AccD/PCCB family. In terms of assembly, acetyl-CoA carboxylase is a heterohexamer composed of biotin carboxyl carrier protein (AccB), biotin carboxylase (AccC) and two subunits each of ACCase subunit alpha (AccA) and ACCase subunit beta (AccD).

It is found in the cytoplasm. It catalyses the reaction N(6)-carboxybiotinyl-L-lysyl-[protein] + acetyl-CoA = N(6)-biotinyl-L-lysyl-[protein] + malonyl-CoA. Its pathway is lipid metabolism; malonyl-CoA biosynthesis; malonyl-CoA from acetyl-CoA: step 1/1. In terms of biological role, component of the acetyl coenzyme A carboxylase (ACC) complex. Biotin carboxylase (BC) catalyzes the carboxylation of biotin on its carrier protein (BCCP) and then the CO(2) group is transferred by the transcarboxylase to acetyl-CoA to form malonyl-CoA. In Brucella canis (strain ATCC 23365 / NCTC 10854 / RM-666), this protein is Acetyl-coenzyme A carboxylase carboxyl transferase subunit beta.